The following is a 503-amino-acid chain: Probable cytosol aminopeptidase (503 aa).

Lysine 268 and aspartate 273 together coordinate Mn(2+). Residue lysine 280 is part of the active site. Mn(2+) contacts are provided by aspartate 291, aspartate 350, and glutamate 352. The active site involves arginine 354.

This sequence belongs to the peptidase M17 family. The cofactor is Mn(2+).

The protein localises to the cytoplasm. The enzyme catalyses Release of an N-terminal amino acid, Xaa-|-Yaa-, in which Xaa is preferably Leu, but may be other amino acids including Pro although not Arg or Lys, and Yaa may be Pro. Amino acid amides and methyl esters are also readily hydrolyzed, but rates on arylamides are exceedingly low.. The catalysed reaction is Release of an N-terminal amino acid, preferentially leucine, but not glutamic or aspartic acids.. In terms of biological role, presumably involved in the processing and regular turnover of intracellular proteins. Catalyzes the removal of unsubstituted N-terminal amino acids from various peptides. The protein is Probable cytosol aminopeptidase of Herminiimonas arsenicoxydans.